Here is a 360-residue protein sequence, read N- to C-terminus: Luc7-like protein (360 aa).

The stretch at 143–206 (KEQNSKITEL…QEKNENKRMS (64 aa)) forms a coiled coil. Residues 255 to 360 (LGRTDFYNAP…DDRRKRDRNY (106 aa)) are disordered. Basic and acidic residues predominate over residues 269-293 (DSYRDDRRSSSSSYHDIDGRRDHRY). Residues 312-321 (NNGRGSSRDN) are compositionally biased toward low complexity. Positions 329–360 (RDYRNDHGKDYDRKRERDYYNDDDRRKRDRNY) are enriched in basic and acidic residues.

The protein belongs to the Luc7 family.

The protein resides in the nucleus. May play a role in RNA splicing. This chain is Luc7-like protein (crop), found in Dictyostelium discoideum (Social amoeba).